We begin with the raw amino-acid sequence, 855 residues long: Oxysterol-binding protein-related protein 3 (855 aa).

The tract at residues 1 to 32 is disordered; that stretch reads MSDEKNLGVSQKLVSPSRSTSSCSSKQGSRQD. S15 and S33 each carry phosphoserine. Over residues 15–31 the composition is skewed to low complexity; sequence SPSRSTSSCSSKQGSRQ. A PH domain is found at 50-145; that stretch reads PPVQKGFLLK…WVSKLRHHRM (96 aa). Residues 161–167 carry the FFAT 1 motif; the sequence is FFSGSSV. Phosphoserine is present on residues S199, S250, S272, S277, S288, S291, S340, S393, S405, and S408. The disordered stretch occupies residues 274-293; sequence PNLSTLDFGEEKSYSDGSEA. The segment at 377-396 is disordered; sequence DPPAVPKPGDNLAEENSRDE. An FFAT 2 motif is present at residues 450-454; that stretch reads LSLDN. Positions 468-490 are disordered; that stretch reads PVLESSGEARSKRRTSLPAPGPN.

Belongs to the OSBP family. As to quaternary structure, homodimer. Interacts with RRAS. Interacts (phosphorylated form) with VAPA. Interacts with OSBPL6. Post-translationally, phosphorylation is enhanced in vitro by phorbol-12-myristate-13-acetate (PMA), forskolin and calcium ionophore A23187. Phosphorylation seems to be stimulated in conditions of low cell-cell (or cell-matrix) adhesion. Expressed in spinal ganglia. Expressed in a subset of small lymphocytes (at protein level).

It is found in the endoplasmic reticulum membrane. The protein localises to the cytoplasm. The protein resides in the cytosol. It localises to the cell membrane. Its subcellular location is the cell projection. It is found in the filopodium tip. The protein localises to the nucleus membrane. Its function is as follows. Phosphoinositide-binding protein which associates with both cell and endoplasmic reticulum (ER) membranes. Can bind to the ER membrane protein VAPA and recruit VAPA to plasma membrane sites, thus linking these intracellular compartments. The ORP3-VAPA complex stimulates RRAS signaling which in turn attenuates integrin beta-1 (ITGB1) activation at the cell surface. With VAPA, may regulate ER morphology. Has a role in regulation of the actin cytoskeleton, cell polarity and cell adhesion. Binds to phosphoinositides with preference for PI(3,4)P2 and PI(3,4,5)P3. Also binds 25-hydroxycholesterol and cholesterol. This is Oxysterol-binding protein-related protein 3 (Osbpl3) from Mus musculus (Mouse).